The chain runs to 296 residues: Phosphoribosylaminoimidazole-succinocarboxamide synthase (296 aa).

The protein belongs to the SAICAR synthetase family.

It carries out the reaction 5-amino-1-(5-phospho-D-ribosyl)imidazole-4-carboxylate + L-aspartate + ATP = (2S)-2-[5-amino-1-(5-phospho-beta-D-ribosyl)imidazole-4-carboxamido]succinate + ADP + phosphate + 2 H(+). The protein operates within purine metabolism; IMP biosynthesis via de novo pathway; 5-amino-1-(5-phospho-D-ribosyl)imidazole-4-carboxamide from 5-amino-1-(5-phospho-D-ribosyl)imidazole-4-carboxylate: step 1/2. The polypeptide is Phosphoribosylaminoimidazole-succinocarboxamide synthase (Desulfotalea psychrophila (strain LSv54 / DSM 12343)).